Reading from the N-terminus, the 438-residue chain is Tol-Pal system protein TolB (438 aa).

An N-terminal signal peptide occupies residues 1–21 (MVKRSLLVLALLICLPATLFA).

This sequence belongs to the TolB family. In terms of assembly, the Tol-Pal system is composed of five core proteins: the inner membrane proteins TolA, TolQ and TolR, the periplasmic protein TolB and the outer membrane protein Pal. They form a network linking the inner and outer membranes and the peptidoglycan layer.

Its subcellular location is the periplasm. Its function is as follows. Part of the Tol-Pal system, which plays a role in outer membrane invagination during cell division and is important for maintaining outer membrane integrity. This is Tol-Pal system protein TolB from Desulfosudis oleivorans (strain DSM 6200 / JCM 39069 / Hxd3) (Desulfococcus oleovorans).